The sequence spans 371 residues: Succinyl-diaminopimelate desuccinylase (371 aa).

Zn(2+) is bound at residue His-68. Asp-70 is an active-site residue. A Zn(2+)-binding site is contributed by Asp-99. The active-site Proton acceptor is the Glu-130. Positions 131, 159, and 344 each coordinate Zn(2+).

This sequence belongs to the peptidase M20A family. DapE subfamily. In terms of assembly, homodimer. It depends on Zn(2+) as a cofactor. Requires Co(2+) as cofactor.

The enzyme catalyses N-succinyl-(2S,6S)-2,6-diaminopimelate + H2O = (2S,6S)-2,6-diaminopimelate + succinate. It participates in amino-acid biosynthesis; L-lysine biosynthesis via DAP pathway; LL-2,6-diaminopimelate from (S)-tetrahydrodipicolinate (succinylase route): step 3/3. Catalyzes the hydrolysis of N-succinyl-L,L-diaminopimelic acid (SDAP), forming succinate and LL-2,6-diaminopimelate (DAP), an intermediate involved in the bacterial biosynthesis of lysine and meso-diaminopimelic acid, an essential component of bacterial cell walls. The polypeptide is Succinyl-diaminopimelate desuccinylase (Acidiphilium cryptum (strain JF-5)).